A 233-amino-acid chain; its full sequence is Guanylate kinase (233 aa).

Residues 3–184 (GTIFIISAPS…AVEQLRAIVL (182 aa)) enclose the Guanylate kinase-like domain. 10–17 (APSGSGKS) contacts ATP.

This sequence belongs to the guanylate kinase family.

It is found in the cytoplasm. It catalyses the reaction GMP + ATP = GDP + ADP. In terms of biological role, essential for recycling GMP and indirectly, cGMP. The polypeptide is Guanylate kinase (Koribacter versatilis (strain Ellin345)).